The primary structure comprises 334 residues: Glycerol-3-phosphate dehydrogenase [NAD(P)+] (334 aa).

Residues Ser13, Phe14, and Lys108 each coordinate NADPH. Residues Lys108, Gly137, and Thr139 each contribute to the sn-glycerol 3-phosphate site. Ala141 is a binding site for NADPH. Sn-glycerol 3-phosphate contacts are provided by Lys193, Asp246, Ser256, Arg257, and Asn258. Lys193 serves as the catalytic Proton acceptor. Arg257 lines the NADPH pocket. NADPH contacts are provided by Val281 and Glu283.

It belongs to the NAD-dependent glycerol-3-phosphate dehydrogenase family.

It localises to the cytoplasm. The catalysed reaction is sn-glycerol 3-phosphate + NAD(+) = dihydroxyacetone phosphate + NADH + H(+). The enzyme catalyses sn-glycerol 3-phosphate + NADP(+) = dihydroxyacetone phosphate + NADPH + H(+). The protein operates within membrane lipid metabolism; glycerophospholipid metabolism. Its function is as follows. Catalyzes the reduction of the glycolytic intermediate dihydroxyacetone phosphate (DHAP) to sn-glycerol 3-phosphate (G3P), the key precursor for phospholipid synthesis. This is Glycerol-3-phosphate dehydrogenase [NAD(P)+] from Bartonella tribocorum (strain CIP 105476 / IBS 506).